A 71-amino-acid chain; its full sequence is ATP synthase subunit c (71 aa).

The next 2 helical transmembrane spans lie at 9 to 29 and 49 to 69; these read MIGY…IFAA and LLGF…AFVI.

This sequence belongs to the ATPase C chain family. F-type ATPases have 2 components, F(1) - the catalytic core - and F(0) - the membrane proton channel. F(1) has five subunits: alpha(3), beta(3), gamma(1), delta(1), epsilon(1). F(0) has three main subunits: a(1), b(2) and c(10-14). The alpha and beta chains form an alternating ring which encloses part of the gamma chain. F(1) is attached to F(0) by a central stalk formed by the gamma and epsilon chains, while a peripheral stalk is formed by the delta and b chains.

Its subcellular location is the cell membrane. In terms of biological role, f(1)F(0) ATP synthase produces ATP from ADP in the presence of a proton or sodium gradient. F-type ATPases consist of two structural domains, F(1) containing the extramembraneous catalytic core and F(0) containing the membrane proton channel, linked together by a central stalk and a peripheral stalk. During catalysis, ATP synthesis in the catalytic domain of F(1) is coupled via a rotary mechanism of the central stalk subunits to proton translocation. Functionally, key component of the F(0) channel; it plays a direct role in translocation across the membrane. A homomeric c-ring of between 10-14 subunits forms the central stalk rotor element with the F(1) delta and epsilon subunits. In Micrococcus luteus (strain ATCC 4698 / DSM 20030 / JCM 1464 / CCM 169 / CCUG 5858 / IAM 1056 / NBRC 3333 / NCIMB 9278 / NCTC 2665 / VKM Ac-2230) (Micrococcus lysodeikticus), this protein is ATP synthase subunit c.